The sequence spans 160 residues: Putative flagellin YvzB (160 aa).

This sequence belongs to the bacterial flagellin family. In terms of assembly, interacts with FliW.

Its subcellular location is the bacterial flagellum. In Bacillus subtilis (strain 168), this protein is Putative flagellin YvzB (yvzB).